The sequence spans 591 residues: Serine/threonine-protein kinase Nek2 (591 aa).

The 255-residue stretch at Tyr4 to Leu258 folds into the Protein kinase domain. ATP-binding positions include Ile10–Ala18 and Lys33. The Proton acceptor role is filled by Asp129. Disordered stretches follow at residues Leu309–Arg331, Glu387–Asn408, and Arg500–Ser534. 2 stretches are compositionally biased toward polar residues: residues Thr391–Asn408 and Asp504–Ser534.

It belongs to the protein kinase superfamily. NEK Ser/Thr protein kinase family. NIMA subfamily.

It carries out the reaction L-seryl-[protein] + ATP = O-phospho-L-seryl-[protein] + ADP + H(+). It catalyses the reaction L-threonyl-[protein] + ATP = O-phospho-L-threonyl-[protein] + ADP + H(+). Functionally, may be involved in plant development processes. This Oryza sativa subsp. indica (Rice) protein is Serine/threonine-protein kinase Nek2 (NEK2).